A 406-amino-acid chain; its full sequence is Tryptophan synthase beta chain (406 aa).

K99 carries the N6-(pyridoxal phosphate)lysine modification.

The protein belongs to the TrpB family. As to quaternary structure, tetramer of two alpha and two beta chains. Requires pyridoxal 5'-phosphate as cofactor.

It carries out the reaction (1S,2R)-1-C-(indol-3-yl)glycerol 3-phosphate + L-serine = D-glyceraldehyde 3-phosphate + L-tryptophan + H2O. It participates in amino-acid biosynthesis; L-tryptophan biosynthesis; L-tryptophan from chorismate: step 5/5. The beta subunit is responsible for the synthesis of L-tryptophan from indole and L-serine. The protein is Tryptophan synthase beta chain of Allorhizobium ampelinum (strain ATCC BAA-846 / DSM 112012 / S4) (Agrobacterium vitis (strain S4)).